A 182-amino-acid polypeptide reads, in one-letter code: ATP-dependent protease subunit HslV (182 aa).

Thr2 is a catalytic residue. Na(+) is bound by residues Gly157, Cys160, and Thr163.

Belongs to the peptidase T1B family. HslV subfamily. A double ring-shaped homohexamer of HslV is capped on each side by a ring-shaped HslU homohexamer. The assembly of the HslU/HslV complex is dependent on binding of ATP.

It is found in the cytoplasm. The enzyme catalyses ATP-dependent cleavage of peptide bonds with broad specificity.. With respect to regulation, allosterically activated by HslU binding. Its function is as follows. Protease subunit of a proteasome-like degradation complex believed to be a general protein degrading machinery. The protein is ATP-dependent protease subunit HslV of Sodalis glossinidius (strain morsitans).